Here is a 536-residue protein sequence, read N- to C-terminus: Phosphoenolpyruvate carboxykinase (ATP) (536 aa).

3 residues coordinate substrate: arginine 61, tyrosine 195, and lysine 201. ATP-binding positions include lysine 201, histidine 220, and 236 to 244; that span reads GLSGTGKTT. Positions 201 and 220 each coordinate Mn(2+). Aspartate 257 serves as a coordination point for Mn(2+). ATP contacts are provided by glutamate 285, arginine 322, and threonine 447. Arginine 322 provides a ligand contact to substrate.

Belongs to the phosphoenolpyruvate carboxykinase (ATP) family. The cofactor is Mn(2+).

The protein localises to the cytoplasm. It carries out the reaction oxaloacetate + ATP = phosphoenolpyruvate + ADP + CO2. Its pathway is carbohydrate biosynthesis; gluconeogenesis. Involved in the gluconeogenesis. Catalyzes the conversion of oxaloacetate (OAA) to phosphoenolpyruvate (PEP) through direct phosphoryl transfer between the nucleoside triphosphate and OAA. In Rhizobium etli (strain ATCC 51251 / DSM 11541 / JCM 21823 / NBRC 15573 / CFN 42), this protein is Phosphoenolpyruvate carboxykinase (ATP).